The following is a 212-amino-acid chain: Adenylate kinase (212 aa).

10-15 is a binding site for ATP; it reads GAGKGT. Positions 30 to 59 are NMP; that stretch reads STGDMFRAAMANQTEMGRLAKSYIDKGELV. AMP contacts are provided by residues Thr31, Arg36, 57–59, 86–89, and Gln93; these read ELV and GYPR. Residues 127 to 159 are LID; sequence GRIINRKTGETFHKVFNPPVDYKEEDYYQREDD. ATP contacts are provided by residues Arg128 and 137-138; that span reads TF. AMP contacts are provided by Arg156 and Arg167. ATP is bound at residue Gln195.

Belongs to the adenylate kinase family. In terms of assembly, monomer.

Its subcellular location is the cytoplasm. It catalyses the reaction AMP + ATP = 2 ADP. Its pathway is purine metabolism; AMP biosynthesis via salvage pathway; AMP from ADP: step 1/1. Catalyzes the reversible transfer of the terminal phosphate group between ATP and AMP. Plays an important role in cellular energy homeostasis and in adenine nucleotide metabolism. The protein is Adenylate kinase of Streptococcus pyogenes serotype M3 (strain ATCC BAA-595 / MGAS315).